We begin with the raw amino-acid sequence, 109 residues long: Large ribosomal subunit protein uL24 (109 aa).

Belongs to the universal ribosomal protein uL24 family. Part of the 50S ribosomal subunit.

In terms of biological role, one of two assembly initiator proteins, it binds directly to the 5'-end of the 23S rRNA, where it nucleates assembly of the 50S subunit. Its function is as follows. One of the proteins that surrounds the polypeptide exit tunnel on the outside of the subunit. The polypeptide is Large ribosomal subunit protein uL24 (Rickettsia bellii (strain RML369-C)).